Consider the following 106-residue polypeptide: ELLKTVRVIKFLYQSNPPPRPEGTRQARRNRRRRWRARQRQIQSLSGWILSTFLGRSAEPVPLQLPPLERLTLDCNEDCGTSGTQGVGSPQILVESPTVLESGTKE.

The homomultimerization stretch occupies residues 8–16 (VIKFLYQSN). The disordered stretch occupies residues 13–36 (YQSNPPPRPEGTRQARRNRRRRWR). Positions 24–40 (TRQARRNRRRRWRARQR) match the Nuclear localization signal and RNA-binding (RRE) motif. Basic residues predominate over residues 26–36 (QARRNRRRRWR). The Nuclear export signal and binding to XPO1 signature appears at 63–74 (LQLPPLERLTLD). Residues Ser82 and Ser89 each carry the phosphoserine; by host modification.

This sequence belongs to the HIV-1 REV protein family. As to quaternary structure, homomultimer; when bound to the RRE. Multimeric assembly is essential for activity and may involve XPO1. Binds to human KPNB1, XPO1, TNPO1, RANBP5 and IPO7. Interacts with the viral Integrase. Interacts with human KHDRBS1. Interacts with human NAP1; this interaction decreases Rev multimerization and stimulates its activity. Interacts with human DEAD-box helicases DDX3 and DDX24; these interactions may serve for viral RNA export to the cytoplasm and packaging, respectively. Interacts with human PSIP1; this interaction may inhibit HIV-1 DNA integration by promoting dissociation of the Integrase-LEDGF/p75 complex. Asymmetrically arginine dimethylated at one site by host PRMT6. Methylation impairs the RNA-binding activity and export of viral RNA from the nucleus to the cytoplasm. In terms of processing, phosphorylated by protein kinase CK2. Presence of, and maybe binding to the N-terminus of the regulatory beta subunit of CK2 is necessary for CK2-mediated Rev's phosphorylation.

It localises to the host nucleus. Its subcellular location is the host nucleolus. It is found in the host cytoplasm. Functionally, escorts unspliced or incompletely spliced viral pre-mRNAs (late transcripts) out of the nucleus of infected cells. These pre-mRNAs carry a recognition sequence called Rev responsive element (RRE) located in the env gene, that is not present in fully spliced viral mRNAs (early transcripts). This function is essential since most viral proteins are translated from unspliced or partially spliced pre-mRNAs which cannot exit the nucleus by the pathway used by fully processed cellular mRNAs. Rev itself is translated from a fully spliced mRNA that readily exits the nucleus. Rev's nuclear localization signal (NLS) binds directly to KPNB1/Importin beta-1 without previous binding to KPNA1/Importin alpha-1. KPNB1 binds to the GDP bound form of RAN (Ran-GDP) and targets Rev to the nucleus. In the nucleus, the conversion from Ran-GDP to Ran-GTP dissociates Rev from KPNB1 and allows Rev's binding to the RRE in viral pre-mRNAs. Rev multimerization on the RRE via cooperative assembly exposes its nuclear export signal (NES) to the surface. Rev can then form a complex with XPO1/CRM1 and Ran-GTP, leading to nuclear export of the complex. Conversion from Ran-GTP to Ran-GDP mediates dissociation of the Rev/RRE/XPO1/RAN complex, so that Rev can return to the nucleus for a subsequent round of export. Beside KPNB1, also seems to interact with TNPO1/Transportin-1, RANBP5/IPO5 and IPO7/RANBP7 for nuclear import. The nucleoporin-like HRB/RIP is an essential cofactor that probably indirectly interacts with Rev to release HIV RNAs from the perinuclear region to the cytoplasm. This is Protein Rev from Homo sapiens (Human).